The sequence spans 158 residues: 6,7-dimethyl-8-ribityllumazine synthase (158 aa).

5-amino-6-(D-ribitylamino)uracil is bound by residues Phe-24, 62-64, and 86-88; these read CFE and AVI. 91–92 lines the (2S)-2-hydroxy-3-oxobutyl phosphate pocket; it reads DT. His-94 serves as the catalytic Proton donor. Phe-119 contacts 5-amino-6-(D-ribitylamino)uracil. Arg-133 serves as a coordination point for (2S)-2-hydroxy-3-oxobutyl phosphate.

This sequence belongs to the DMRL synthase family.

The enzyme catalyses (2S)-2-hydroxy-3-oxobutyl phosphate + 5-amino-6-(D-ribitylamino)uracil = 6,7-dimethyl-8-(1-D-ribityl)lumazine + phosphate + 2 H2O + H(+). It participates in cofactor biosynthesis; riboflavin biosynthesis; riboflavin from 2-hydroxy-3-oxobutyl phosphate and 5-amino-6-(D-ribitylamino)uracil: step 1/2. In terms of biological role, catalyzes the formation of 6,7-dimethyl-8-ribityllumazine by condensation of 5-amino-6-(D-ribitylamino)uracil with 3,4-dihydroxy-2-butanone 4-phosphate. This is the penultimate step in the biosynthesis of riboflavin. The polypeptide is 6,7-dimethyl-8-ribityllumazine synthase (Picosynechococcus sp. (strain ATCC 27264 / PCC 7002 / PR-6) (Agmenellum quadruplicatum)).